We begin with the raw amino-acid sequence, 247 residues long: Lys-63-specific deubiquitinase BRCC36 (247 aa).

The residue at position 2 (Ala-2) is an N-acetylalanine. The region spanning 12–179 (VHLESDAFLV…YTCFQSIQAQ (168 aa)) is the MPN domain. Zn(2+)-binding residues include His-122, His-124, and Asp-135. The JAMM motif signature appears at 122–135 (HSHPHITVWPSHVD). Phosphoserine is present on Ser-189.

It belongs to the peptidase M67A family. BRCC36 subfamily. As to quaternary structure, component of the ARISC complex, at least composed of UIMC1/RAP80, ABRAXAS1, BRCC3/BRCC36, BABAM2 and BABAM1/NBA1. Component of the BRCA1-A complex, at least composed of BRCA1, BARD1, UIMC1/RAP80, ABRAXAS1, BRCC3/BRCC36, BABAM2 and BABAM1/NBA1. In the BRCA1-A complex, interacts directly with ABRAXAS1 and BABAM2. Component of the BRISC complex, at least composed of ABRAXAS2, BRCC3/BRCC36, BABAM2 and BABAM1/NBA1. Identified in a complex with SHMT2 and the other subunits of the BRISC complex. In the BRISC complex, interacts directly with ABRAXAS2. Identified in a complex with ABRAXAS2 and NUMA1. The BRISC complex interacts with the CSN complex. Component of the BRCA1/BRCA2 containing complex (BRCC), which also contains BRCA1, BRCA2, BARD1, BABAM2 and RAD51. BRCC is a ubiquitin E3 ligase complex that enhances cellular survival following DNA damage. Interacts with BRCA1. Binds polyubiquitin. Interacts with PWWP2B. Interacts with HDAC1; this interaction is enhanced in the presence of PWWP2B. It depends on Zn(2+) as a cofactor.

Its subcellular location is the nucleus. It is found in the cytoplasm. It localises to the cytoskeleton. The protein resides in the spindle pole. Metalloprotease that specifically cleaves 'Lys-63'-linked polyubiquitin chains. Does not have activity toward 'Lys-48'-linked polyubiquitin chains. Component of the BRCA1-A complex, a complex that specifically recognizes 'Lys-63'-linked ubiquitinated histones H2A and H2AX at DNA lesions sites, leading to target the BRCA1-BARD1 heterodimer to sites of DNA damage at double-strand breaks (DSBs). In the BRCA1-A complex, it specifically removes 'Lys-63'-linked ubiquitin on histones H2A and H2AX, antagonizing the RNF8-dependent ubiquitination at double-strand breaks (DSBs). Catalytic subunit of the BRISC complex, a multiprotein complex that specifically cleaves 'Lys-63'-linked ubiquitin in various substrates. Mediates the specific 'Lys-63'-specific deubiquitination associated with the COP9 signalosome complex (CSN), via the interaction of the BRISC complex with the CSN complex. The BRISC complex is required for normal mitotic spindle assembly and microtubule attachment to kinetochores via its role in deubiquitinating NUMA1. Plays a role in interferon signaling via its role in the deubiquitination of the interferon receptor IFNAR1; deubiquitination increases IFNAR1 activity by enhancing its stability and cell surface expression. Acts as a regulator of the NLRP3 inflammasome by mediating deubiquitination of NLRP3, leading to NLRP3 inflammasome assembly. Down-regulates the response to bacterial lipopolysaccharide (LPS) via its role in IFNAR1 deubiquitination. Deubiquitinates HDAC1 and PWWP2B leading to their stabilization. The sequence is that of Lys-63-specific deubiquitinase BRCC36 (BRCC3) from Pongo abelii (Sumatran orangutan).